A 159-amino-acid chain; its full sequence is Endoribonuclease YbeY (159 aa).

Positions 126, 130, and 136 each coordinate Zn(2+).

Belongs to the endoribonuclease YbeY family. Requires Zn(2+) as cofactor.

Its subcellular location is the cytoplasm. Single strand-specific metallo-endoribonuclease involved in late-stage 70S ribosome quality control and in maturation of the 3' terminus of the 16S rRNA. This chain is Endoribonuclease YbeY, found in Thermodesulfovibrio yellowstonii (strain ATCC 51303 / DSM 11347 / YP87).